The sequence spans 660 residues: UvrABC system protein C (660 aa).

Residues 16 to 95 enclose the GIY-YIG domain; it reads ESPGVYRFRD…IKQYDPRFNV (80 aa). Residues 208–243 form the UVR domain; it reads DAMVRRLEREMAEASAELEFERAARLRDDLAALRRA. The segment at 469 to 501 is disordered; it reads GEAGVESAGDPDAPAGPDAPDEPRVGTLVDPTT. Low complexity predominate over residues 476-486; sequence AGDPDAPAGPD.

This sequence belongs to the UvrC family. As to quaternary structure, interacts with UvrB in an incision complex.

It localises to the cytoplasm. The UvrABC repair system catalyzes the recognition and processing of DNA lesions. UvrC both incises the 5' and 3' sides of the lesion. The N-terminal half is responsible for the 3' incision and the C-terminal half is responsible for the 5' incision. The protein is UvrABC system protein C of Salinispora arenicola (strain CNS-205).